Reading from the N-terminus, the 312-residue chain is Non-structural protein 12A (312 aa).

Residues 1 to 23 (MFKSGSGSLKRSGSISSVKSFSG) are compositionally biased toward low complexity. Disordered stretches follow at residues 1 to 37 (MFKSGSGSLKRSGSISSVKSFSGDSEKGLPPISRGSV), 62 to 99 (FVPEKTKSEGNLKDKSSVITGNFGSSGPINAHTNQNAD), and 111 to 161 (ESSK…GTGD). Basic and acidic residues predominate over residues 63–77 (VPEKTKSEGNLKDKS). Over residues 78 to 98 (SVITGNFGSSGPINAHTNQNA) the composition is skewed to polar residues. A compositionally biased stretch (basic and acidic residues) spans 122–134 (DARHTATDSRLSQ).

This sequence belongs to the phytoreovirus non-structural protein Pns12A family.

The protein localises to the host cytoplasm. Constituent of viral factories. Binds to ssRNA and dsRNA. The chain is Non-structural protein 12A from Alopecurus aequalis (Barnyard grass).